The following is a 240-amino-acid chain: uncharacterized protein (240 aa).

This is an uncharacterized protein from Thermotoga maritima (strain ATCC 43589 / DSM 3109 / JCM 10099 / NBRC 100826 / MSB8).